The chain runs to 107 residues: U1-lycotoxin-Ls1e (107 aa).

Residues 1–20 (MMKVLVVVALLVTLISYSSS) form the signal peptide. A propeptide spanning residues 21–41 (EGIDDLEADELLSLMANEQTR) is cleaved from the precursor. Intrachain disulfides connect Cys-44/Cys-59, Cys-51/Cys-68, Cys-58/Cys-86, and Cys-70/Cys-84.

Belongs to the neurotoxin 19 (CSTX) family. 04 (U1-Lctx) subfamily. Expressed by the venom gland.

It is found in the secreted. This Lycosa singoriensis (Wolf spider) protein is U1-lycotoxin-Ls1e.